The primary structure comprises 179 residues: Large ribosomal subunit protein uL6 (179 aa).

It belongs to the universal ribosomal protein uL6 family. Part of the 50S ribosomal subunit.

In terms of biological role, this protein binds to the 23S rRNA, and is important in its secondary structure. It is located near the subunit interface in the base of the L7/L12 stalk, and near the tRNA binding site of the peptidyltransferase center. The protein is Large ribosomal subunit protein uL6 of Herpetosiphon aurantiacus (strain ATCC 23779 / DSM 785 / 114-95).